The following is a 714-amino-acid chain: Fatty acid oxidation complex subunit alpha (714 aa).

An enoyl-CoA hydratase region spans residues 1-190; sequence MDTVSAFKLE…KAGLVDEVVP (190 aa). Residues 306 to 714 form a 3-hydroxyacyl-CoA dehydrogenase region; the sequence is GSLRSVAVLG…TFWPADERLT (409 aa).

In the N-terminal section; belongs to the enoyl-CoA hydratase/isomerase family. It in the central section; belongs to the 3-hydroxyacyl-CoA dehydrogenase family. Heterotetramer of two alpha chains (FadJ) and two beta chains (FadI).

It is found in the cytoplasm. It catalyses the reaction a (3S)-3-hydroxyacyl-CoA = a (2E)-enoyl-CoA + H2O. The catalysed reaction is a 4-saturated-(3S)-3-hydroxyacyl-CoA = a (3E)-enoyl-CoA + H2O. The enzyme catalyses a (3S)-3-hydroxyacyl-CoA + NAD(+) = a 3-oxoacyl-CoA + NADH + H(+). It carries out the reaction (3S)-3-hydroxybutanoyl-CoA = (3R)-3-hydroxybutanoyl-CoA. Its pathway is lipid metabolism; fatty acid beta-oxidation. Functionally, catalyzes the formation of a hydroxyacyl-CoA by addition of water on enoyl-CoA. Also exhibits 3-hydroxyacyl-CoA epimerase and 3-hydroxyacyl-CoA dehydrogenase activities. The protein is Fatty acid oxidation complex subunit alpha of Klebsiella pneumoniae subsp. pneumoniae (strain ATCC 700721 / MGH 78578).